A 648-amino-acid chain; its full sequence is Biosynthetic arginine decarboxylase (648 aa).

Position 109 is an N6-(pyridoxal phosphate)lysine (Lys109). A substrate-binding site is contributed by 291 to 301; sequence LDVGGGLGVDY.

Belongs to the Orn/Lys/Arg decarboxylase class-II family. SpeA subfamily. The cofactor is Mg(2+). Pyridoxal 5'-phosphate serves as cofactor.

It catalyses the reaction L-arginine + H(+) = agmatine + CO2. Its pathway is amine and polyamine biosynthesis; agmatine biosynthesis; agmatine from L-arginine: step 1/1. Its function is as follows. Catalyzes the biosynthesis of agmatine from arginine. The protein is Biosynthetic arginine decarboxylase of Prochlorococcus marinus (strain MIT 9303).